Consider the following 31-residue polypeptide: Cytochrome b6-f complex subunit 6 (31 aa).

Residues leucine 3–leucine 23 form a helical membrane-spanning segment.

It belongs to the PetL family. The 4 large subunits of the cytochrome b6-f complex are cytochrome b6, subunit IV (17 kDa polypeptide, PetD), cytochrome f and the Rieske protein, while the 4 small subunits are PetG, PetL, PetM and PetN. The complex functions as a dimer.

It is found in the plastid. The protein localises to the chloroplast thylakoid membrane. In terms of biological role, component of the cytochrome b6-f complex, which mediates electron transfer between photosystem II (PSII) and photosystem I (PSI), cyclic electron flow around PSI, and state transitions. PetL is important for photoautotrophic growth as well as for electron transfer efficiency and stability of the cytochrome b6-f complex. The polypeptide is Cytochrome b6-f complex subunit 6 (Porphyra purpurea (Red seaweed)).